The chain runs to 203 residues: MMTAVAIRPERLRDHIAAALGARLRQITLALEEVTVVLAAADYFDAMRVLRDDPVCRFEQLIDLCAVDYSTYADAVQQGPRYCVVAHLLSVSLNQRLRVKVFCPDDDFPLLPSVCGLWNSANWYEREAFDLFGILFDGHDDLRRILTDYGFIGHPFRKDFPLSGHVQMRYDAELRRVVYEPVSIEPREITPRIIREDHYADPH.

It belongs to the complex I 30 kDa subunit family. In terms of assembly, NDH-1 is composed of 14 different subunits. Subunits NuoB, C, D, E, F, and G constitute the peripheral sector of the complex.

It is found in the cell inner membrane. The enzyme catalyses a quinone + NADH + 5 H(+)(in) = a quinol + NAD(+) + 4 H(+)(out). NDH-1 shuttles electrons from NADH, via FMN and iron-sulfur (Fe-S) centers, to quinones in the respiratory chain. The immediate electron acceptor for the enzyme in this species is believed to be ubiquinone. Couples the redox reaction to proton translocation (for every two electrons transferred, four hydrogen ions are translocated across the cytoplasmic membrane), and thus conserves the redox energy in a proton gradient. The polypeptide is NADH-quinone oxidoreductase subunit C (Verminephrobacter eiseniae (strain EF01-2)).